Reading from the N-terminus, the 146-residue chain is Large ribosomal subunit protein bL21 (146 aa).

The tract at residues 103 to 146 (DGKSPTIGPRPKKEKAVEPVEGASDDKPRRAAKKTAAKTAEDAD) is disordered. The span at 116–131 (EKAVEPVEGASDDKPR) shows a compositional bias: basic and acidic residues.

The protein belongs to the bacterial ribosomal protein bL21 family. Part of the 50S ribosomal subunit. Contacts protein L20.

In terms of biological role, this protein binds to 23S rRNA in the presence of protein L20. The polypeptide is Large ribosomal subunit protein bL21 (Nitrobacter winogradskyi (strain ATCC 25391 / DSM 10237 / CIP 104748 / NCIMB 11846 / Nb-255)).